The sequence spans 457 residues: MSKRYAVVLAAGQGTRMKSKLYKVLHPVCGKPMVEHVVDQISTLNVDKVVTIVGHGAEKVQEHLAGKSEFVKQDEQLGTAHAVLQAKAELAGKDGVTLVVCGDTPLIEASTMEALLKYHHEKRAKATILTTVIEDPTGYGRIIRDDLGIVEKIVEHKDATEKEQRISEINTGTYCFDNKALFEALENVSNDNVQGEYYLPDVIKILKDSDEVVAAYRMESFEESLGVNDRIALAEASKLMQRRINENHMRNGVTLVNPESTYIDIDVKIGQDTVIEPGVMLRGKTVIGDDCVVTSGSEIVNSVIGERVHVRTSSIFESKVGDDVQIGPYAHLRPESDIHDHVKIGNYVETKKAVVGEGTKLPHFIYMGDAEIGKNVNVGCGSIAVNYDGKNKAKTIIGDNVFVGCNSNLIAPVKVGDRAFIAAGSTITKDVPEDALGIARAKQDNKLGYAKHLNHSK.

A pyrophosphorylase region spans residues 1–230 (MSKRYAVVLA…FEESLGVNDR (230 aa)). UDP-N-acetyl-alpha-D-glucosamine is bound by residues 9-12 (LAAG), K23, Q73, and 78-79 (GT). D103 contributes to the Mg(2+) binding site. UDP-N-acetyl-alpha-D-glucosamine is bound by residues G140, E155, N170, and N228. N228 provides a ligand contact to Mg(2+). Residues 231–251 (IALAEASKLMQRRINENHMRN) form a linker region. Residues 252-457 (GVTLVNPEST…GYAKHLNHSK (206 aa)) form an N-acetyltransferase region. UDP-N-acetyl-alpha-D-glucosamine contacts are provided by R333 and K351. The active-site Proton acceptor is H363. The UDP-N-acetyl-alpha-D-glucosamine site is built by Y366 and N377. Acetyl-CoA is bound by residues 386–387 (NY), A423, and R440.

In the N-terminal section; belongs to the N-acetylglucosamine-1-phosphate uridyltransferase family. It in the C-terminal section; belongs to the transferase hexapeptide repeat family. In terms of assembly, homotrimer. It depends on Mg(2+) as a cofactor.

It localises to the cytoplasm. It catalyses the reaction alpha-D-glucosamine 1-phosphate + acetyl-CoA = N-acetyl-alpha-D-glucosamine 1-phosphate + CoA + H(+). The catalysed reaction is N-acetyl-alpha-D-glucosamine 1-phosphate + UTP + H(+) = UDP-N-acetyl-alpha-D-glucosamine + diphosphate. It functions in the pathway nucleotide-sugar biosynthesis; UDP-N-acetyl-alpha-D-glucosamine biosynthesis; N-acetyl-alpha-D-glucosamine 1-phosphate from alpha-D-glucosamine 6-phosphate (route II): step 2/2. The protein operates within nucleotide-sugar biosynthesis; UDP-N-acetyl-alpha-D-glucosamine biosynthesis; UDP-N-acetyl-alpha-D-glucosamine from N-acetyl-alpha-D-glucosamine 1-phosphate: step 1/1. It participates in bacterial outer membrane biogenesis; LPS lipid A biosynthesis. Catalyzes the last two sequential reactions in the de novo biosynthetic pathway for UDP-N-acetylglucosamine (UDP-GlcNAc). The C-terminal domain catalyzes the transfer of acetyl group from acetyl coenzyme A to glucosamine-1-phosphate (GlcN-1-P) to produce N-acetylglucosamine-1-phosphate (GlcNAc-1-P), which is converted into UDP-GlcNAc by the transfer of uridine 5-monophosphate (from uridine 5-triphosphate), a reaction catalyzed by the N-terminal domain. In Listeria monocytogenes serovar 1/2a (strain ATCC BAA-679 / EGD-e), this protein is Bifunctional protein GlmU.